We begin with the raw amino-acid sequence, 327 residues long: Phenylalanine--tRNA ligase alpha subunit (327 aa).

Residue Glu-252 participates in Mg(2+) binding.

This sequence belongs to the class-II aminoacyl-tRNA synthetase family. Phe-tRNA synthetase alpha subunit type 1 subfamily. As to quaternary structure, tetramer of two alpha and two beta subunits. Requires Mg(2+) as cofactor.

It localises to the cytoplasm. The enzyme catalyses tRNA(Phe) + L-phenylalanine + ATP = L-phenylalanyl-tRNA(Phe) + AMP + diphosphate + H(+). This chain is Phenylalanine--tRNA ligase alpha subunit, found in Vibrio campbellii (strain ATCC BAA-1116).